The following is a 502-amino-acid chain: MEIKAEEISEIIRKQIKEYGTEVAVAETGTIISIGDGIARIHGLDKAMAGELLEFPGGITGMVLNLEEDNVGAAILGEFSEIKEGDSVKLTGKIVEVPVGPALIGRVVDAIGNPIDGLGPINTDTFGKVEVKAPGIVKRKSVHQPMQTGLKAIDSMVPIGRGQRELIIGDRQTGKTAVAIDTIINQKGGDVVCIYVAIGQKRSTVAQVVSKLKEHGAMDYTIVVAATASEPAPLQFIAPYTGVTMGEFFRDSGKHALIIYDDLSKQAVAYRQLSLLLRRPPGREAYPGDVFYLHSRLLERACKVSDDCGAGSLTALPVIETQAGDVSAYIPTNVISITDGQIYLESDLFYSGVRPAINVGLSVSRVGGSAQVKAMKQVAGTLRLALAQYREMAAFAQFGSDLDKATQMQLARGARLVEILKQPQYRPIPNEKQVLIIFAANNGFVDEYPIGSLGRYETELYAFFDSRKATLLGELRDKKAIDDAMKGEIIASLEEFKKEFTA.

169–176 (GDRQTGKT) contributes to the ATP binding site.

Belongs to the ATPase alpha/beta chains family. As to quaternary structure, F-type ATPases have 2 components, CF(1) - the catalytic core - and CF(0) - the membrane proton channel. CF(1) has five subunits: alpha(3), beta(3), gamma(1), delta(1), epsilon(1). CF(0) has three main subunits: a(1), b(2) and c(9-12). The alpha and beta chains form an alternating ring which encloses part of the gamma chain. CF(1) is attached to CF(0) by a central stalk formed by the gamma and epsilon chains, while a peripheral stalk is formed by the delta and b chains.

It localises to the cell inner membrane. It carries out the reaction ATP + H2O + 4 H(+)(in) = ADP + phosphate + 5 H(+)(out). Produces ATP from ADP in the presence of a proton gradient across the membrane. The alpha chain is a regulatory subunit. This Geobacter sp. (strain M21) protein is ATP synthase subunit alpha.